The following is a 168-amino-acid chain: Photosystem I assembly protein Ycf3 (168 aa).

TPR repeat units follow at residues alanine 35–proline 68, serine 72–leucine 105, and glycine 120–asparagine 153.

Belongs to the Ycf3 family.

Its subcellular location is the plastid. It localises to the chloroplast thylakoid membrane. In terms of biological role, essential for the assembly of the photosystem I (PSI) complex. May act as a chaperone-like factor to guide the assembly of the PSI subunits. The chain is Photosystem I assembly protein Ycf3 from Ipomoea purpurea (Common morning glory).